The primary structure comprises 219 residues: Phosphoribosylformylglycinamidine synthase subunit PurQ (219 aa).

Positions 2–219 constitute a Glutamine amidotransferase type-1 domain; that stretch reads KIAVITFPGS…KVVLDLILGS (218 aa). Cys-86 (nucleophile) is an active-site residue. Residues His-195 and Glu-197 contribute to the active site.

In terms of assembly, part of the FGAM synthase complex composed of 1 PurL, 1 PurQ and 2 PurS subunits.

The protein localises to the cytoplasm. The enzyme catalyses N(2)-formyl-N(1)-(5-phospho-beta-D-ribosyl)glycinamide + L-glutamine + ATP + H2O = 2-formamido-N(1)-(5-O-phospho-beta-D-ribosyl)acetamidine + L-glutamate + ADP + phosphate + H(+). It catalyses the reaction L-glutamine + H2O = L-glutamate + NH4(+). It participates in purine metabolism; IMP biosynthesis via de novo pathway; 5-amino-1-(5-phospho-D-ribosyl)imidazole from N(2)-formyl-N(1)-(5-phospho-D-ribosyl)glycinamide: step 1/2. Part of the phosphoribosylformylglycinamidine synthase complex involved in the purines biosynthetic pathway. Catalyzes the ATP-dependent conversion of formylglycinamide ribonucleotide (FGAR) and glutamine to yield formylglycinamidine ribonucleotide (FGAM) and glutamate. The FGAM synthase complex is composed of three subunits. PurQ produces an ammonia molecule by converting glutamine to glutamate. PurL transfers the ammonia molecule to FGAR to form FGAM in an ATP-dependent manner. PurS interacts with PurQ and PurL and is thought to assist in the transfer of the ammonia molecule from PurQ to PurL. The sequence is that of Phosphoribosylformylglycinamidine synthase subunit PurQ from Leptospira interrogans serogroup Icterohaemorrhagiae serovar copenhageni (strain Fiocruz L1-130).